We begin with the raw amino-acid sequence, 40 residues long: Protamine-1 (40 aa).

Residues 1–40 (MPPRRKRVSSAPRRRRRTYRRTTAHKHQDRPVHRRRRRRH) are disordered.

As to expression, testis.

The protein resides in the nucleus. The protein localises to the chromosome. Functionally, protamines substitute for histones in the chromatin of sperm during the haploid phase of spermatogenesis. They compact sperm DNA into a highly condensed, stable and inactive complex. In Bufo japonicus (Japanese common toad), this protein is Protamine-1 (PBP1).